We begin with the raw amino-acid sequence, 377 residues long: 4-hydroxy-3-methylbut-2-en-1-yl diphosphate synthase (flavodoxin) (377 aa).

[4Fe-4S] cluster-binding residues include C275, C278, C310, and E317.

It belongs to the IspG family. It depends on [4Fe-4S] cluster as a cofactor.

It carries out the reaction (2E)-4-hydroxy-3-methylbut-2-enyl diphosphate + oxidized [flavodoxin] + H2O + 2 H(+) = 2-C-methyl-D-erythritol 2,4-cyclic diphosphate + reduced [flavodoxin]. The protein operates within isoprenoid biosynthesis; isopentenyl diphosphate biosynthesis via DXP pathway; isopentenyl diphosphate from 1-deoxy-D-xylulose 5-phosphate: step 5/6. Converts 2C-methyl-D-erythritol 2,4-cyclodiphosphate (ME-2,4cPP) into 1-hydroxy-2-methyl-2-(E)-butenyl 4-diphosphate. This Jannaschia sp. (strain CCS1) protein is 4-hydroxy-3-methylbut-2-en-1-yl diphosphate synthase (flavodoxin).